A 255-amino-acid chain; its full sequence is Putative expansin-A27 (255 aa).

The first 24 residues, 1–24 (MGAMAENLLVLCTILAARMALAAA), serve as a signal peptide directing secretion. The 116-residue stretch at 45-160 (GGACGYGNLY…RRVRCWRRGG (116 aa)) folds into the Expansin-like EG45 domain. Positions 170 to 249 (HFELVLVANV…GWKFGQTFST (80 aa)) constitute an Expansin-like CBD domain.

This sequence belongs to the expansin family. Expansin A subfamily.

Its subcellular location is the secreted. The protein resides in the cell wall. The protein localises to the membrane. May cause loosening and extension of plant cell walls by disrupting non-covalent bonding between cellulose microfibrils and matrix glucans. No enzymatic activity has been found. May be required for rapid internodal elongation in deepwater rice during submergence. The sequence is that of Putative expansin-A27 (EXPA27) from Oryza sativa subsp. japonica (Rice).